Reading from the N-terminus, the 294-residue chain is MASLKDLRNRIASVKATQKITKAMQMVAAAKLRRAQEAAEAARPYAERMDRVLANLATGMTGRSDAPALLAGTGSDQVHLVIVATADRGLCGGFNSSIVRLARQHINKLVGEGKTVKILTVGRKGRDALKRDHASRIVKSYEFTGIRHIGFEQAEDISRTVIDLFEAGEFDVATIFYSKFVNVVSQIPTAQQLIPASVPADAGGSVDLGGAVYEYEPDEGEILKDILPRNLSVQIFRALLENVAGEFGAKMSAMDNATRNAGDMIKKLNITYNRSRQAMITKELIEIISGAEAL.

It belongs to the ATPase gamma chain family. In terms of assembly, F-type ATPases have 2 components, CF(1) - the catalytic core - and CF(0) - the membrane proton channel. CF(1) has five subunits: alpha(3), beta(3), gamma(1), delta(1), epsilon(1). CF(0) has three main subunits: a, b and c.

The protein resides in the cell inner membrane. Its function is as follows. Produces ATP from ADP in the presence of a proton gradient across the membrane. The gamma chain is believed to be important in regulating ATPase activity and the flow of protons through the CF(0) complex. This is ATP synthase gamma chain from Parvibaculum lavamentivorans (strain DS-1 / DSM 13023 / NCIMB 13966).